Consider the following 231-residue polypeptide: NADH-ubiquinone oxidoreductase chain 4 (231 aa).

The next 6 membrane-spanning stretches (helical) occupy residues 1-21 (PIAG…YGII), 34-54 (LFLP…LTCL), 63-85 (IAYS…TPWG), 89-111 (AMAL…NTTY), 128-148 (ILPM…AIPP), and 156-176 (LLIM…LGLS).

The protein belongs to the complex I subunit 4 family.

The protein resides in the mitochondrion membrane. The catalysed reaction is a ubiquinone + NADH + 5 H(+)(in) = a ubiquinol + NAD(+) + 4 H(+)(out). In terms of biological role, core subunit of the mitochondrial membrane respiratory chain NADH dehydrogenase (Complex I) that is believed to belong to the minimal assembly required for catalysis. Complex I functions in the transfer of electrons from NADH to the respiratory chain. The immediate electron acceptor for the enzyme is believed to be ubiquinone. This chain is NADH-ubiquinone oxidoreductase chain 4 (MT-ND4), found in Crotalus concolor (Midget faded rattlesnake).